The following is a 490-amino-acid chain: MGRKYVVLGLAVCLFLSSFNEVSCQAEGGIESSNSEFQGSFLEEGEVEVTKIESESQSSSSEQNTKLSMSEENQEDSFDVDKFIESEAVSSREELGQSSSMDEVNRDLEAILDSLNKRDGSDDISKVGESMDAAGIADERRQRLEDIERKLKAAAATNIVVEDGTSKRKSKVEETQEVVKFESESSSASSESRRQSSSSYNSFNKGTGGSEMLGSLGISQSGSWRCYNQDKNGVSEEEDTSIVIPKYDIDSIIKEESTSQGSSSKTSSLIASLTKIVEKHRKEKWSSGVSVSVTKGASSTQTSETVEKLKVTLKKYRGLSARELVARSDFEEILATAARYEELSSASVSHISRLSMYRSVIKEGIKASQRVQLAYARTRLLKEMAVEKQKNVDAELALVKALAERGDMLYVKIFAIKKLISKLEAEKYEVDMTFEKTVANLSRVIEEASQAYEEYHVVVRKWKEEQASEEFSREAIERVEMVWVEFLSTL.

Residues 1–24 (MGRKYVVLGLAVCLFLSSFNEVSC) form the signal peptide. Disordered regions lie at residues 43 to 83 (EEGE…VDKF) and 155 to 206 (AATN…FNKG). The stretch at 136 to 163 (IADERRQRLEDIERKLKAAAATNIVVED) forms a coiled coil. Over residues 171 to 183 (KVEETQEVVKFES) the composition is skewed to basic and acidic residues. Residues 184–199 (ESSSASSESRRQSSSS) show a composition bias toward low complexity. Residues 433 to 465 (TFEKTVANLSRVIEEASQAYEEYHVVVRKWKEE) adopt a coiled-coil conformation.

The sequence is that of NAI2-like protein from Arabidopsis thaliana (Mouse-ear cress).